A 726-amino-acid polypeptide reads, in one-letter code: Putative tyrosine-protein kinase AmsA (726 aa).

2 consecutive transmembrane segments (helical) span residues 32-52 (WMIV…SLFA) and 425-445 (ILIV…LVLM).

The protein belongs to the etk/wzc family.

It is found in the cell inner membrane. The enzyme catalyses L-tyrosyl-[protein] + ATP = O-phospho-L-tyrosyl-[protein] + ADP + H(+). It functions in the pathway glycan metabolism; exopolysaccharide biosynthesis. Its function is as follows. Involved in the biosynthesis of amylovoran which functions as a virulence factor. The sequence is that of Putative tyrosine-protein kinase AmsA (amsA) from Erwinia amylovora (Fire blight bacteria).